The chain runs to 340 residues: E3 ubiquitin ligase BIG BROTHER-related (340 aa).

2 disordered regions span residues 1–56 and 133–182; these read MPME…GVGE and YDED…GNSD. Over residues 34–46 the composition is skewed to polar residues; that stretch reads NRQTGVVSDTGSG. Composition is skewed to acidic residues over residues 133–164 and 173–182; these read YDED…EDGL and DDQEDDGNSD. An RING-type; atypical zinc finger spans residues 288-329; that stretch reads CVICRLDYEDDEDLILLPCKHSYHSECINNWLKINKVCPVCS.

Post-translationally, auto-ubiquitinated.

The enzyme catalyses S-ubiquitinyl-[E2 ubiquitin-conjugating enzyme]-L-cysteine + [acceptor protein]-L-lysine = [E2 ubiquitin-conjugating enzyme]-L-cysteine + N(6)-ubiquitinyl-[acceptor protein]-L-lysine.. It functions in the pathway protein modification; protein ubiquitination. E3 ubiquitin-ligase probably involved in organ size regulation. The sequence is that of E3 ubiquitin ligase BIG BROTHER-related (BBR) from Arabidopsis thaliana (Mouse-ear cress).